The primary structure comprises 339 residues: Transmembrane protein 120B (339 aa).

Positions 1-67 (MSGQLERCER…KHTLQRYKRH (67 aa)) form a coiled coil. Transmembrane regions (helical) follow at residues 102–124 (GLYL…AKFA), 132–152 (FKLY…FVLH), 159–179 (VFNF…SILI), 187–207 (GWWV…LTWP), 270–290 (FLLP…VTLF), and 302–322 (QVFV…LTTL).

This sequence belongs to the TMEM120 family. As to quaternary structure, heterooligomer with TMEM120A. Expressed in inguinal and subcutaneous white adipose tissue and in brown adipose tissue.

The protein resides in the nucleus inner membrane. In terms of biological role, necessary for efficient adipogenesis. Does not show ion channel activity. The protein is Transmembrane protein 120B of Mus musculus (Mouse).